Reading from the N-terminus, the 839-residue chain is A disintegrin and metalloproteinase with thrombospondin motifs 4 (839 aa).

The first 51 residues, M1–P51, serve as a signal peptide directing secretion. A propeptide spanning residues A52–R212 is cleaved from the precursor. N-linked (GlcNAc...) asparagine glycosylation occurs at N68. Positions E166 to R209 are disordered. The Cysteine switch signature appears at P192–P199. C194 contributes to the Zn(2+) binding site. Residues R218 to P428 form the Peptidase M12B domain. Disulfide bonds link C293/C345, C322/C327, C339/C423, C377/C407, C449/C472, C460/C482, C467/C501, C495/C506, C532/C569, C536/C574, and C547/C559. H361 contacts Zn(2+). E362 is an active-site residue. H365 and H371 together coordinate Zn(2+). One can recognise a Disintegrin domain in the interval T437 to Q519. Positions A520–P575 constitute a TSP type-1 domain. The segment at S686 to K839 is spacer.

Interacts with SRPX2. The cofactor is Zn(2+). The precursor is cleaved by a furin endopeptidase. In terms of processing, glycosylated. Can be O-fucosylated by POFUT2 on a serine or a threonine residue found within the consensus sequence C1-X(2)-(S/T)-C2-G of the TSP type-1 repeat domains where C1 and C2 are the first and second cysteine residue of the repeat, respectively. Fucosylated repeats can then be further glycosylated by the addition of a beta-1,3-glucose residue by the glucosyltransferase, B3GALTL. Fucosylation mediates the efficient secretion of ADAMTS family members. Can also be C-glycosylated with one or two mannose molecules on tryptophan residues within the consensus sequence W-X-X-W of the TPRs, and N-glycosylated. These other glycosylations can also facilitate secretion.

The protein resides in the secreted. It localises to the extracellular space. The protein localises to the extracellular matrix. It catalyses the reaction Glutamyl endopeptidase. Bonds cleaved include 370-Thr-Glu-Gly-Glu-|-Ala-Arg-Gly-Ser-377 in the interglobular domain of mammalian aggrecan.. In terms of biological role, cleaves aggrecan, a cartilage proteoglycan, at the '392-Glu-|-Ala-393' site and may be involved in its turnover. Also cleaves COMP. May play an important role in the destruction of aggrecan in arthritic diseases. The polypeptide is A disintegrin and metalloproteinase with thrombospondin motifs 4 (ADAMTS4) (Bos taurus (Bovine)).